A 429-amino-acid polypeptide reads, in one-letter code: MHDIELIKKDPELFDRAMISRGFGEQAEKIIELDLKKRGELSTLYSLREQRNAVTREVALLKRSGIECTPQIEASKKLAEEIATLEHSIKEDTKLSNLLESLPNVPDPIVPVGKDESHNVEVRSHGQRRDFAFGIRPHYELGEMLNLLDFKRAAVLSGARFSILKGQLAELERALASFMLDMHTKEFGYTEISHPVLVNERTMYNVGQLPKFHDDSFRTTNNFRLAPTSEVALANLVSGTTLPRDSLPMRFTAYSQCFRAEAGSAGLDTRGMMRQHQFGKVELVSITTSDASNAELERMTSIAEEVLKRLELPYRVMLLCSGDMGFSASISYDLEVWMPAQDKYREISSCSNCRDFQARRMGAKYFFFENKKKHSTLVHTLNGSALAIGRTIAAIMENYQNEDGSITIPDVLRKYTGASAIMRAEDALP.

Residue 228–230 participates in L-serine binding; it reads TSE. ATP is bound at residue 259–261; it reads RAE. E282 provides a ligand contact to L-serine. ATP is bound at residue 346–349; the sequence is EISS. Position 384 (S384) interacts with L-serine.

The protein belongs to the class-II aminoacyl-tRNA synthetase family. Type-1 seryl-tRNA synthetase subfamily. Homodimer. The tRNA molecule binds across the dimer.

It is found in the cytoplasm. The catalysed reaction is tRNA(Ser) + L-serine + ATP = L-seryl-tRNA(Ser) + AMP + diphosphate + H(+). It carries out the reaction tRNA(Sec) + L-serine + ATP = L-seryl-tRNA(Sec) + AMP + diphosphate + H(+). It functions in the pathway aminoacyl-tRNA biosynthesis; selenocysteinyl-tRNA(Sec) biosynthesis; L-seryl-tRNA(Sec) from L-serine and tRNA(Sec): step 1/1. Its function is as follows. Catalyzes the attachment of serine to tRNA(Ser). Is also able to aminoacylate tRNA(Sec) with serine, to form the misacylated tRNA L-seryl-tRNA(Sec), which will be further converted into selenocysteinyl-tRNA(Sec). The chain is Serine--tRNA ligase from Anaplasma marginale (strain St. Maries).